The primary structure comprises 113 residues: UPF0102 protein Dgeo_1894 (113 aa).

It belongs to the UPF0102 family.

The sequence is that of UPF0102 protein Dgeo_1894 from Deinococcus geothermalis (strain DSM 11300 / CIP 105573 / AG-3a).